The sequence spans 317 residues: Olfactory receptor 5K17 (317 aa).

Over 1-28 the chain is Extracellular; the sequence is MMKANHSLTVEFILIGFSDHTDLKTLLF. Residue N5 is glycosylated (N-linked (GlcNAc...) asparagine). A helical membrane pass occupies residues 29 to 49; the sequence is LLFSAIYLVTIVGNLGLVALI. At 50 to 56 the chain is on the cytoplasmic side; the sequence is YMEPRLH. The chain crosses the membrane as a helical span at residues 57–77; that stretch reads TPMYIFLGNLALMDSCCSCAI. Residues 78–93 lie on the Extracellular side of the membrane; that stretch reads TPKMLENFFSVDRRIS. A helical transmembrane segment spans residues 94–114; sequence LYECMVQFYFLCLAETADCFL. C97 and C189 are joined by a disulfide. Topologically, residues 115–144 are cytoplasmic; sequence LAAMAYDRYVAICNPLQYHTMMSKKLSIQM. A helical membrane pass occupies residues 145–165; it reads SIGTFIASNLHSLIHTGCLLR. Topologically, residues 166–198 are extracellular; that stretch reads LNFCKSRRIDHFFCDILPLYKLSCTDPFINELM. A helical transmembrane segment spans residues 199–219; the sequence is LYIFSMPIQVFTITTVLVSYS. Over 220–239 the chain is Cytoplasmic; that stretch reads CILLTVFKMKSKDGRGKAFS. Residues 240–259 traverse the membrane as a helical segment; that stretch reads TCASHFFSVSIFYICLLMYI. Residues 260 to 268 lie on the Extracellular side of the membrane; the sequence is GPSKNSNKD. A helical transmembrane segment spans residues 269–289; it reads IPVGVFYTIVIPLLNPFIYSL. Residues 290 to 317 are Cytoplasmic-facing; sequence RNKEVVNAVKKVMKTHSIFKNSSASIAH.

The protein belongs to the G-protein coupled receptor 1 family.

It is found in the cell membrane. Functionally, potential odorant receptor. The sequence is that of Olfactory receptor 5K17 from Mus musculus (Mouse).